The primary structure comprises 348 residues: DnaJ homolog subfamily B member 5 (348 aa).

One can recognise a J domain in the interval D4–G68.

This chain is DnaJ homolog subfamily B member 5 (Dnajb5), found in Mus musculus (Mouse).